A 71-amino-acid chain; its full sequence is Putative membrane protein insertion efficiency factor (71 aa).

Belongs to the UPF0161 family.

Its subcellular location is the cell membrane. In terms of biological role, could be involved in insertion of integral membrane proteins into the membrane. The sequence is that of Putative membrane protein insertion efficiency factor from Clostridium acetobutylicum (strain ATCC 824 / DSM 792 / JCM 1419 / IAM 19013 / LMG 5710 / NBRC 13948 / NRRL B-527 / VKM B-1787 / 2291 / W).